The sequence spans 110 residues: Cytochrome c6 (110 aa).

A signal peptide spans Met-1–Ala-25. 4 residues coordinate heme c: Cys-39, Cys-42, His-43, and Met-83.

The protein belongs to the cytochrome c family. PetJ subfamily. In terms of assembly, monomer. In terms of processing, binds 1 heme c group covalently per subunit.

The protein resides in the cellular thylakoid lumen. Functions as an electron carrier between membrane-bound cytochrome b6-f and photosystem I in oxygenic photosynthesis. This Gloeothece citriformis (strain PCC 7424) (Cyanothece sp. (strain PCC 7424)) protein is Cytochrome c6.